The chain runs to 458 residues: Lysine-rich nucleolar protein 1 (458 aa).

Positions 1–14 (MITKTHKVDLGLPE) are enriched in basic and acidic residues. Residues 1-21 (MITKTHKVDLGLPEKKKKKKV) form a disordered region. Lysine 7 participates in a covalent cross-link: Glycyl lysine isopeptide (Lys-Gly) (interchain with G-Cter in SUMO2). Phosphoserine occurs at positions 42 and 50. Positions 46–305 (ATSPSKSVAH…ESGVAGDPWK (260 aa)) are disordered. Residues 64-73 (VKKKKKKKKG) show a composition bias toward basic residues. Lysine 101 participates in a covalent cross-link: Glycyl lysine isopeptide (Lys-Gly) (interchain with G-Cter in SUMO2). Serine 111 bears the Phosphoserine mark. A Glycyl lysine isopeptide (Lys-Gly) (interchain with G-Cter in SUMO2) cross-link involves residue lysine 130. Serine 132 carries the phosphoserine modification. The segment covering 145 to 155 (GKKLKKHKKEK) has biased composition (basic residues). Basic and acidic residues predominate over residues 173-192 (EAREARDVGDTCSVGKKDEE). Positions 198–218 (QKRKRKSPREHNGKVKKKKKI) are enriched in basic residues. A Glycyl lysine isopeptide (Lys-Gly) (interchain with G-Cter in SUMO1); alternate cross-link involves residue lysine 249. A Glycyl lysine isopeptide (Lys-Gly) (interchain with G-Cter in SUMO2); alternate cross-link involves residue lysine 249. Phosphoserine is present on serine 265. The segment covering 265 to 274 (SAKKKMKSKK) has biased composition (basic residues). Glycyl lysine isopeptide (Lys-Gly) (interchain with G-Cter in SUMO2) cross-links involve residues lysine 275, lysine 287, and lysine 305. Residues 306-458 (EETDTDLEVV…NASKSVKLED (153 aa)) are interaction with ZNF106. 2 positions are modified to phosphothreonine: threonine 308 and threonine 310. Glycyl lysine isopeptide (Lys-Gly) (interchain with G-Cter in SUMO2) cross-links involve residues lysine 319, lysine 353, lysine 373, lysine 375, and lysine 407. Residues 336-353 (QEEIDRESGKTEASETRK) are compositionally biased toward basic and acidic residues. The tract at residues 336–355 (QEEIDRESGKTEASETRKWT) is disordered. The residue at position 430 (arginine 430) is an Omega-N-methylarginine. Residue lysine 442 forms a Glycyl lysine isopeptide (Lys-Gly) (interchain with G-Cter in SUMO2) linkage.

Interacts with ZNF106.

It is found in the nucleus. Its subcellular location is the nucleolus. The protein is Lysine-rich nucleolar protein 1 (KNOP1) of Homo sapiens (Human).